The chain runs to 306 residues: tRNA pseudouridine synthase B (306 aa).

Asp48 acts as the Nucleophile in catalysis.

The protein belongs to the pseudouridine synthase TruB family. Type 1 subfamily.

It catalyses the reaction uridine(55) in tRNA = pseudouridine(55) in tRNA. Responsible for synthesis of pseudouridine from uracil-55 in the psi GC loop of transfer RNAs. This chain is tRNA pseudouridine synthase B, found in Haemophilus influenzae (strain PittEE).